A 92-amino-acid chain; its full sequence is C-C motif chemokine 3 (92 aa).

The N-terminal stretch at 1 to 26 (MQVSTAALAVLLCTVALCNRISATFA) is a signal peptide. Intrachain disulfides connect cysteine 33–cysteine 57 and cysteine 34–cysteine 73.

It belongs to the intercrine beta (chemokine CC) family. Self-associates. Also heterodimer of MIP-1-alpha(4-69) and MIP-1-beta(3-69). Interacts with CCR1.

It is found in the secreted. Functionally, monokine with inflammatory and chemokinetic properties. Binds to CCR1, CCR4 and CCR5. One of the major HIV-suppressive factors produced by CD8+ T-cells. Recombinant MIP-1-alpha induces a dose-dependent inhibition of different strains of HIV-1, HIV-2, and simian immunodeficiency virus (SIV). The polypeptide is C-C motif chemokine 3 (CCL3) (Macaca mulatta (Rhesus macaque)).